A 1032-amino-acid chain; its full sequence is Suppression of tumorigenicity 18 protein (1032 aa).

Disordered stretches follow at residues 29–76, 162–213, and 325–354; these read RAEE…TNDH, GRDK…LTYN, and RQPK…AKCP. The segment covering 40–51 has biased composition (basic residues); that stretch reads NKRKSLLMKPRH. Over residues 52–76 the composition is skewed to basic and acidic residues; that stretch reads YSPDMDCKENPDNRNEDDGLETNDH. 6 consecutive CCHHC-type zinc fingers follow at residues 344-387, 388-431, 700-743, 744-787, 792-835, and 845-888; these read PRPE…PLEI, LAMH…KLAM, RDLK…LKSL, MAAN…GIKM, EEKE…QKEN, and KLNK…IKKV. Zn(2+) contacts are provided by Cys-353, Cys-358, His-371, Cys-377, Cys-397, Cys-402, His-415, Cys-421, Cys-709, Cys-714, His-727, Cys-733, Cys-753, Cys-758, His-771, Cys-777, Cys-801, Cys-806, His-819, Cys-825, Cys-854, Cys-859, His-872, and Cys-878. A coiled-coil region spans residues 905 to 974; it reads IEGDEEIRHL…KELAGLSQAL (70 aa).

This sequence belongs to the MYT1 family. Detected in brain.

Its subcellular location is the nucleus. Functionally, repressor that binds to DNA sequences containing a bipartite element consisting of a direct repeat of the sequence 5'-AAAGTTT-3' separated by 2-9 nucleotides. Represses basal transcription activity from target promoters. The chain is Suppression of tumorigenicity 18 protein (St18) from Rattus norvegicus (Rat).